Here is a 394-residue protein sequence, read N- to C-terminus: MNKKSIRDIDVKGKRVFTRVDFNVPLEDGKITDDTRIRAALPTIKHLVDGGAKVILASHMGRPKGEKNPEFSLAPVVARLSELLGKDIKLVEEAYGPVAEEAVSKLEEGDVIVLENVRFYPGETKNDPELAEGFAKLADVFVNDAFGAAHRAHASTEGIAHHVETAVAGLLIEKELQVLGKALSNPDRPFTAIIGGSKVADKIGVIDHLLDIVDTLIIGGGLSYTFLKAQGYEVGTSLLEVDKIEQAKEFMKKAEDKGVKFLMPVDCVITKEFGEETYVGSRDIDSIPADHMSLDIGPKTVELYAEAIKASKLVVWNGPMGVFELDKYANGTKGVAQALADSDAYSIIGGGDSAAAAEKFGLADKMSHISTGGGASLEFMEGKALPGVEALNDK.

Substrate-binding positions include 21–23 (DFN), arginine 36, 59–62 (HMGR), arginine 118, and arginine 151. Residues lysine 202, glutamate 324, and 350–353 (GGDS) contribute to the ATP site.

The protein belongs to the phosphoglycerate kinase family. In terms of assembly, monomer.

The protein resides in the cytoplasm. The enzyme catalyses (2R)-3-phosphoglycerate + ATP = (2R)-3-phospho-glyceroyl phosphate + ADP. It functions in the pathway carbohydrate degradation; glycolysis; pyruvate from D-glyceraldehyde 3-phosphate: step 2/5. This Exiguobacterium sibiricum (strain DSM 17290 / CCUG 55495 / CIP 109462 / JCM 13490 / 255-15) protein is Phosphoglycerate kinase.